Consider the following 343-residue polypeptide: MLTRRALVVQSQGEVQVEEIPLPTLRDEYITVKVKAVALNPGDWKMLYGPHATPGSILGCDYSGVVEKVGRAVNALLTPGDRVAGFAFGGCPYNHDEGGFASYVTAKGDIQAKLSDSISFEDAATLGVGITTVGQAMYQALGLPLPPAIIQEAASILVYGASTATGTLAVQYAKLTGLKVFATASPHNFDLLKKLGADEVFDYRDPECGAKIRTVTNGLLSLVFDTISEGSSPAIWAAAMGAKGGKYTALLPIKNFPRSDVKVTTILGYTALGVKVSDHLPANQKDFEFSAKFWKLSQHLLEKEKIKTHPVGVRQGGIDAIPQGLQDLKNGRVSGVKLVYKID.

An NADP(+)-binding site is contributed by 42 to 45 (GDWK). Residue 128–135 (VGITTVGQ) coordinates substrate. NADP(+) is bound by residues 162–165 (STAT), 185–188 (SPHN), and Tyr-203. 268-272 (GYTAL) is a binding site for substrate. An NADP(+)-binding site is contributed by 333-334 (VS).

The protein belongs to the zinc-containing alcohol dehydrogenase family. Monomer.

It functions in the pathway mycotoxin biosynthesis. Functionally, trans-enoyl reductase; part of the gene clusters that mediate the biosynthesis of the host-selective toxins (HSTs) ACT-toxins responsible for brown spot of tangerine disease by the tangerine pathotype which affects tangerines and mandarins. ACT-toxins consist of three moieties, 9,10-epoxy-8-hydroxy-9-methyl-decatrienoic acid (EDA), valine and a polyketide. ACT-toxin I is toxic to both citrus and pear; toxin II the 5''-deoxy derivative of ACT-toxin I, is highly toxic to pear and slightly toxic to citrus. On cellular level, ACT-toxins affect plasma membrane of susceptible cells and cause a sudden increase in loss of K(+) after a few minutes of toxin treatment. The acyl-CoA ligase ACTT1, the hydrolase ACTT2, the enoyl-CoA hydratases ACTT3 and ACTT6, and the acyl-CoA synthetase ACTT5 are all involved in the biosynthesis of the AK-, AF- and ACT-toxin common 9,10-epoxy-8-hydroxy-9-methyl-decatrienoic acid (EDA) structural moiety. The exact role of each enzyme, and of additional enzymes identified within the AF-toxin clusters have still to be determined. On the other hand, ACTTS1 to ACTTS4 are specific to the tangerine pathotype. The function of ACTTS3 is to elongate the polyketide chain portion of ACT-toxin that is unique to this toxin. The enoyl-reductase ACTTS2 might complement the missing enoyl-reductase (ER) domain in ACTTS3 in the synthesis of the polyketide portion of ACT-toxin. The roles of the nonribosomal peptide synthetases-related proteins ACTTS1 and ACTTS4 have also still not been elucidated. The protein is Trans-enoyl reductase ACTTS2 of Alternaria alternata (Alternaria rot fungus).